The chain runs to 464 residues: Glutamate--tRNA ligase 1 (464 aa).

Residues 8–18 (PSPTGHLHVGG) carry the 'HIGH' region motif. Residues 231–235 (PLSKR) carry the 'KMSKS' region motif. Residue Lys-234 participates in ATP binding.

The protein belongs to the class-I aminoacyl-tRNA synthetase family. Glutamate--tRNA ligase type 1 subfamily. Monomer.

The protein resides in the cytoplasm. The enzyme catalyses tRNA(Glu) + L-glutamate + ATP = L-glutamyl-tRNA(Glu) + AMP + diphosphate. Its function is as follows. Catalyzes the attachment of glutamate to tRNA(Glu) in a two-step reaction: glutamate is first activated by ATP to form Glu-AMP and then transferred to the acceptor end of tRNA(Glu). The sequence is that of Glutamate--tRNA ligase 1 from Thermotoga petrophila (strain ATCC BAA-488 / DSM 13995 / JCM 10881 / RKU-1).